The sequence spans 184 residues: ATP synthase subunit b, chloroplastic (184 aa).

Residues 27 to 49 (LATNPINLSVVLGVLIFFGKGVL) traverse the membrane as a helical segment.

The protein belongs to the ATPase B chain family. In terms of assembly, F-type ATPases have 2 components, F(1) - the catalytic core - and F(0) - the membrane proton channel. F(1) has five subunits: alpha(3), beta(3), gamma(1), delta(1), epsilon(1). F(0) has four main subunits: a(1), b(1), b'(1) and c(10-14). The alpha and beta chains form an alternating ring which encloses part of the gamma chain. F(1) is attached to F(0) by a central stalk formed by the gamma and epsilon chains, while a peripheral stalk is formed by the delta, b and b' chains.

The protein resides in the plastid. It localises to the chloroplast thylakoid membrane. In terms of biological role, f(1)F(0) ATP synthase produces ATP from ADP in the presence of a proton or sodium gradient. F-type ATPases consist of two structural domains, F(1) containing the extramembraneous catalytic core and F(0) containing the membrane proton channel, linked together by a central stalk and a peripheral stalk. During catalysis, ATP synthesis in the catalytic domain of F(1) is coupled via a rotary mechanism of the central stalk subunits to proton translocation. Its function is as follows. Component of the F(0) channel, it forms part of the peripheral stalk, linking F(1) to F(0). This Gossypium barbadense (Sea Island cotton) protein is ATP synthase subunit b, chloroplastic.